Consider the following 224-residue polypeptide: Cytidylate kinase (224 aa).

12–20 (GPSGAGKGT) is an ATP binding site.

Belongs to the cytidylate kinase family. Type 1 subfamily.

The protein resides in the cytoplasm. It catalyses the reaction CMP + ATP = CDP + ADP. The catalysed reaction is dCMP + ATP = dCDP + ADP. In Aliivibrio salmonicida (strain LFI1238) (Vibrio salmonicida (strain LFI1238)), this protein is Cytidylate kinase.